Consider the following 128-residue polypeptide: MSNIPAELRFAESHEWARLEADGTVTVGISDHAQEALGDVVFVELPEIGKVFAAGDVAGVVESVKAASDIYSPVAGEVVEVNEALGDSPESLNSEPYSAWIFKVKPASAEADLAKLLDAAGYKGAIGE.

The Lipoyl-binding domain maps to 24–105 (TVTVGISDHA…PYSAWIFKVK (82 aa)). The residue at position 65 (K65) is an N6-lipoyllysine.

It belongs to the GcvH family. As to quaternary structure, the glycine cleavage system is composed of four proteins: P, T, L and H. Requires (R)-lipoate as cofactor.

The glycine cleavage system catalyzes the degradation of glycine. The H protein shuttles the methylamine group of glycine from the P protein to the T protein. In Pseudomonas syringae pv. tomato (strain ATCC BAA-871 / DC3000), this protein is Glycine cleavage system H protein 2.